The sequence spans 248 residues: Malonyl-[acyl-carrier protein] O-methyltransferase 2 (248 aa).

This sequence belongs to the methyltransferase superfamily.

It carries out the reaction malonyl-[ACP] + S-adenosyl-L-methionine = malonyl-[ACP] methyl ester + S-adenosyl-L-homocysteine. It functions in the pathway cofactor biosynthesis; biotin biosynthesis. In terms of biological role, converts the free carboxyl group of a malonyl-thioester to its methyl ester by transfer of a methyl group from S-adenosyl-L-methionine (SAM). It allows to synthesize pimeloyl-ACP via the fatty acid synthetic pathway. This chain is Malonyl-[acyl-carrier protein] O-methyltransferase 2, found in Coxiella burnetii (strain RSA 493 / Nine Mile phase I).